Here is a 214-residue protein sequence, read N- to C-terminus: Thymidylate kinase (214 aa).

An ATP-binding site is contributed by 9–16 (GVDGSGKS).

It belongs to the thymidylate kinase family.

The enzyme catalyses dTMP + ATP = dTDP + ADP. Its function is as follows. Phosphorylation of dTMP to form dTDP in both de novo and salvage pathways of dTTP synthesis. The protein is Thymidylate kinase of Symbiobacterium thermophilum (strain DSM 24528 / JCM 14929 / IAM 14863 / T).